Here is a 478-residue protein sequence, read N- to C-terminus: MESSFEASKSLNENRDDIELIPTQSQGSPSLSSSSTITSTSRLGSNQVLIRIYFIDDTHKTLSIDPNNTTGDQLWEMVSEKLGINNRDSECFFVWAQNDEIEWLLFNHQNISEVIKNWGILKKRYCNTEENSPSSSTSSPILSGLSSIRGKKSNASSTSNANDGSGSGSGSGSGSGSGSGTSTPNSPKGGLSGFLTLGRKNKAQSPQLQSQSSSLSTTIASEHASKLRSSFPTLGEEGQFRLVYRPTSVLPLELERSINTAEATHLFYIQAIHNVINSNYPCEEDVALKLASIQLQVLVGDQKMEHQDHFKESISRYIPSHLLSKRKAEEWEQLVIPQHSLLRGSDSLQLKRAYLETCQRWAYYGSTFFKAKYIPANTSFFTQEFQGKVSIGINGNGFHIIDPKEMKMVSYSYRDIIAWDSTSNSFTIKFKIGQDKKFETKPYIFKTPQGELINDLISDWSEEWESKEKKNNKDSKKK.

Disordered stretches follow at residues 19–39 (ELIP…TITS), 129–196 (EENS…GFLT), and 202–221 (KAQS…TIAS). Composition is skewed to low complexity over residues 22 to 39 (PTQS…TITS) and 129 to 164 (EENS…ANDG). An FERM domain is found at 48 to 468 (VLIRIYFIDD…DWSEEWESKE (421 aa)). Residues 165 to 179 (SGSGSGSGSGSGSGS) are compositionally biased toward gly residues. Low complexity-rich tracts occupy residues 180-189 (GTSTPNSPKG) and 204-216 (QSPQ…SSLS).

This is FERM domain-containing protein B (frmB) from Dictyostelium discoideum (Social amoeba).